Consider the following 152-residue polypeptide: MGSSAITVSFLLFLAFQLPGQTGANPVYGSVSNADLMDFKNLLDRLEDKMPLEDEAVPSQVLSEQNEEAGAPLSPLSEMPPWMGEVNPAQREGGVLGRGPWESSDRSALLKSKLRALLTAPRSLRRSSCFGGRMDRIGAQSGLGCNSFRYRR.

The signal sequence occupies residues 1–24; it reads MGSSAITVSFLLFLAFQLPGQTGA. 2 consecutive propeptides follow at residues 25 to 122 and 92 to 102; these read NPVY…TAPR and EGGVLGRGPWE. The interval 58–101 is disordered; it reads PSQVLSEQNEEAGAPLSPLSEMPPWMGEVNPAQREGGVLGRGPW. Serine 128 is modified (phosphoserine). An intrachain disulfide couples cysteine 129 to cysteine 145. An important for degradation of atrial natriuretic peptide by IDE region spans residues 146 to 150; it reads NSFRY.

This sequence belongs to the natriuretic peptide family. In terms of assembly, homodimer; disulfide-linked antiparallel dimer. The precursor molecule is proteolytically cleaved by CORIN at Arg-122 to produce the atrial natriuretic peptide. Undergoes further proteolytic cleavage by unknown proteases to give rise to long-acting natriuretic peptide, vessel dilator and kaliuretic peptide. Additional processing gives rise to the auriculin and atriopeptin peptides. In the kidneys, alternative processing by an unknown protease results in the peptide urodilatin. In terms of processing, cleavage by MME initiates degradation of the factor and thereby regulates its activity. Degradation by IDE results in reduced activation of NPR1 (in vitro). During IDE degradation, the resulting products can temporarily stimulate NPR2 to produce cGMP, before the fragments are completely degraded and inactivated by IDE (in vitro). Post-translationally, degraded by IDE. Phosphorylation on Ser-128 decreases vasorelaxant activity.

The protein resides in the secreted. Its subcellular location is the perikaryon. It localises to the cell projection. In terms of biological role, hormone that plays a key role in mediating cardio-renal homeostasis, and is involved in vascular remodeling and regulating energy metabolism. Acts by specifically binding and stimulating NPR1 to produce cGMP, which in turn activates effector proteins, such as PRKG1, that drive various biological responses. Regulates vasodilation, natriuresis, diuresis and aldosterone synthesis and is therefore essential for regulating blood pressure, controlling the extracellular fluid volume and maintaining the fluid-electrolyte balance. Also involved in inhibiting cardiac remodeling and cardiac hypertrophy by inducing cardiomyocyte apoptosis and attenuating the growth of cardiomyocytes and fibroblasts. Plays a role in female pregnancy by promoting trophoblast invasion and spiral artery remodeling in uterus, and thus prevents pregnancy-induced hypertension. In adipose tissue, acts in various cGMP- and PKG-dependent pathways to regulate lipid metabolism and energy homeostasis. This includes up-regulating lipid metabolism and mitochondrial oxygen utilization by activating the AMP-activated protein kinase (AMPK), and increasing energy expenditure by acting via MAPK11 to promote the UCP1-dependent thermogenesis of brown adipose tissue. Binds the clearance receptor NPR3 which removes the hormone from circulation. Its function is as follows. May have a role in cardio-renal homeostasis through regulation of natriuresis, diuresis, vasodilation, and inhibiting aldosterone synthesis. In vitro, promotes the production of cGMP and induces vasodilation. May promote natriuresis, at least in part, by enhancing prostaglandin E2 synthesis resulting in the inhibition of renal Na+-K+-ATPase. However reports on the involvement of this peptide in mammal blood volume and blood pressure homeostasis are conflicting; according to a report, in vivo it is not sufficient to activate cGMP and does not inhibit collecting duct transport nor effect diuresis and natriuresis. Appears to bind to specific receptors that are distinct from the receptors bound by atrial natriuretic peptide and vessel dilator. Possibly enhances protein excretion in urine by decreasing proximal tubular protein reabsorption. May have a role in cardio-renal homeostasis through regulation of natriuresis, diuresis, and vasodilation. In vitro, promotes the production of cGMP and induces vasodilation. May promote natriuresis, at least in part, by enhancing prostaglandin E2 synthesis resulting in the inhibition of renal Na+-K+-ATPase. However reports on the involvement of this peptide in mammal blood volume and blood pressure homeostasis are conflicting; according to a report it is not sufficient to activate cGMP and does not inhibit collecting duct transport nor effect diuresis and natriuresis. Appears to bind to specific receptors that are distinct from the receptors bound by the atrial natriuretic and long-acting natriuretic peptides. Possibly functions in protein excretion in urine by maintaining the integrity of the proximal tubules and enhancing protein excretion by decreasing proximal tubular protein reabsorption. Functionally, may have a role in cardio-renal homeostasis through regulation of diuresis and inhibiting aldosterone synthesis. In vitro, promotes the production of cGMP and induces vasodilation. May promote natriuresis, at least in part, by enhancing prostaglandin E2 synthesis resulting in the inhibition of renal Na+-K+-ATPase. May have a role in potassium excretion but not sodium excretion (natriuresis). Possibly enhances protein excretion in urine by decreasing proximal tubular protein reabsorption. In terms of biological role, hormone produced in the kidneys that appears to be important for maintaining cardio-renal homeostasis. Mediates vasodilation, natriuresis and diuresis primarily in the renal system, in order to maintain the extracellular fluid volume and control the fluid-electrolyte balance. Specifically binds and stimulates cGMP production by renal transmembrane receptors, likely NPR1. Urodilatin not ANP, may be the natriuretic peptide responsible for the regulation of sodium and water homeostasis in the kidney. Its function is as follows. May have a role in cardio-renal homeostasis through regulation of natriuresis and vasodilation. In vivo promotes natriuresis and in vitro, vasodilates renal artery strips. May have a role in cardio-renal homeostasis through regulation of regulation of natriuresis and vasodilation. In vivo promotes natriuresis. In vitro, vasodilates intestinal smooth muscle but not smooth muscle strips. Functionally, may have a role in cardio-renal homeostasis through regulation of natriuresis and vasodilation. In vivo promotes natriuresis. In vitro, selectively vasodilates intestinal and vascular smooth muscle strips. In terms of biological role, may have a role in cardio-renal homeostasis through regulation of natriuresis and vasodilation. In vivo promotes natriuresis. In vitro, selectively vasodilates intestinal smooth muscle but not vascular smooth muscle strips. In Bos taurus (Bovine), this protein is Natriuretic peptides A (NPPA).